We begin with the raw amino-acid sequence, 201 residues long: Potassium-transporting ATPase KdpC subunit (201 aa).

Residues 13-33 (IIFIIFTILCGGIYTIFITGI) traverse the membrane as a helical segment.

Belongs to the KdpC family. In terms of assembly, the system is composed of three essential subunits: KdpA, KdpB and KdpC.

It is found in the cell membrane. Part of the high-affinity ATP-driven potassium transport (or Kdp) system, which catalyzes the hydrolysis of ATP coupled with the electrogenic transport of potassium into the cytoplasm. This subunit acts as a catalytic chaperone that increases the ATP-binding affinity of the ATP-hydrolyzing subunit KdpB by the formation of a transient KdpB/KdpC/ATP ternary complex. This chain is Potassium-transporting ATPase KdpC subunit, found in Clostridium botulinum (strain Alaska E43 / Type E3).